Reading from the N-terminus, the 504-residue chain is Signal recognition particle receptor FtsY (504 aa).

Disordered stretches follow at residues 1–71 (MFNW…DDYL) and 116–135 (ESDQ…TEIT). GTP-binding positions include 308–315 (GVNGAGKT), 391–395 (DTAGR), and 455–458 (TKLD).

The protein belongs to the GTP-binding SRP family. FtsY subfamily. As to quaternary structure, part of the signal recognition particle protein translocation system, which is composed of SRP and FtsY.

The protein resides in the cell inner membrane. Its subcellular location is the cytoplasm. The enzyme catalyses GTP + H2O = GDP + phosphate + H(+). In terms of biological role, involved in targeting and insertion of nascent membrane proteins into the cytoplasmic membrane. Acts as a receptor for the complex formed by the signal recognition particle (SRP) and the ribosome-nascent chain (RNC). This Synechocystis sp. (strain ATCC 27184 / PCC 6803 / Kazusa) protein is Signal recognition particle receptor FtsY.